Reading from the N-terminus, the 620-residue chain is Guanylate-binding protein 3 (620 aa).

The tract at residues 1 to 304 (MEAPICLVEN…NAINSGTVPC (304 aa)) is GTPase domain (Globular). The region spanning 29–271 (AQPLVVVAIV…FCSYIFTNGK (243 aa)) is the GB1/RHD3-type G domain. GTP contacts are provided by residues 39–46 (GLYRTGKS), 61–63 (LGS), and 91–95 (DTEGL). Coiled coils occupy residues 375-411 (KKLV…SESL) and 477-582 (DGER…TRRK).

This sequence belongs to the TRAFAC class dynamin-like GTPase superfamily. GB1/RHD3 GTPase family. GB1 subfamily. Heterodimer with other family members, including GBP1, GBP2 and GBP5. Dimerization regulates subcellular location. Brain, lung, heart, spleen, kidney, liver and intestine.

Its subcellular location is the cytoplasm. It localises to the perinuclear region. The protein localises to the golgi apparatus membrane. It carries out the reaction GTP + H2O = GDP + phosphate + H(+). Functionally, interferon (IFN)-inducible GTPase that plays important roles in innate immunity against a diverse range of bacterial, viral and protozoan pathogens. Hydrolyzes GTP very efficiently; GDP rather than GMP is the major reaction product. Following infection, recruited to the pathogen-containing vacuoles or vacuole-escaped bacteria and acts as a positive regulator of inflammasome assembly by promoting the release of inflammasome ligands from bacteria. Acts by promoting lysis of pathogen-containing vacuoles, releasing pathogens into the cytosol. Following pathogen release in the cytosol, promotes recruitment of proteins that mediate bacterial cytolysis, such as Gm12250/Irgb10: this liberates ligands that are detected by inflammasomes, such as lipopolysaccharide (LPS) that activates the non-canonical CASP4/CASP11 inflammasome or double-stranded DNA (dsDNA) that activates the AIM2 inflammasome. May play a role in erythroid differentiation. The protein is Guanylate-binding protein 3 of Mus musculus (Mouse).